We begin with the raw amino-acid sequence, 428 residues long: 3-phosphoshikimate 1-carboxyvinyltransferase (428 aa).

3-phosphoshikimate contacts are provided by K21, S22, and R26. Residue K21 coordinates phosphoenolpyruvate. Residues G92 and R120 each contribute to the phosphoenolpyruvate site. 3-phosphoshikimate is bound by residues S165, Q167, D313, and K340. Q167 is a binding site for phosphoenolpyruvate. D313 (proton acceptor) is an active-site residue. Residues R344 and R386 each coordinate phosphoenolpyruvate.

It belongs to the EPSP synthase family. As to quaternary structure, monomer.

Its subcellular location is the cytoplasm. The catalysed reaction is 3-phosphoshikimate + phosphoenolpyruvate = 5-O-(1-carboxyvinyl)-3-phosphoshikimate + phosphate. It functions in the pathway metabolic intermediate biosynthesis; chorismate biosynthesis; chorismate from D-erythrose 4-phosphate and phosphoenolpyruvate: step 6/7. Functionally, catalyzes the transfer of the enolpyruvyl moiety of phosphoenolpyruvate (PEP) to the 5-hydroxyl of shikimate-3-phosphate (S3P) to produce enolpyruvyl shikimate-3-phosphate and inorganic phosphate. The protein is 3-phosphoshikimate 1-carboxyvinyltransferase of Carboxydothermus hydrogenoformans (strain ATCC BAA-161 / DSM 6008 / Z-2901).